A 522-amino-acid polypeptide reads, in one-letter code: MSLRVHTLPTLLGAVVRPGCRELLCLLMITVAVGPGASGVCPTACICATDIVSCTNKHLSKVPGNLFRLMKRLDLSYNRIGLLDSEWIPVSFAKLNTLILRHNNITSISTGSFSTTPNLKCLDLSSNKLKTVKNAVFQELKVLEVLLLYNNHISYLDPSAFGGLSQLQKLYLSGNFLTQFPMDLYVGRFKLAELMFLDVSYNRIPSMPMHHINLVPGKQLRGIYLHGNPFVCDCSLYSLLVFWYRRHFSSVMDFKNDYTCRLWSDSRHSRQVLLLQDSFMNCSDSIINGSFRALGFIHEAQVGERLMVHCDSKTGNANTDFIWVGPDNRLLEPDKEMENFYVFHNGSLVIESPRFEDAGVYSCIAMNKQRLLNETVDVTINVSNVTVSRSHAHEAFNTAFTTLAACVASIVLVLLYLYLTPCPCKCKTKRQKNMLHQSNAHSSILSPGPASDASADERKAGAGKRVVFLEPLKDTAAGQNGKVRLFPSEAVIAEGILKSTRGKSDSDSVNSVFSDTPFVAST.

Positions 1–39 are cleaved as a signal peptide; it reads MSLRVHTLPTLLGAVVRPGCRELLCLLMITVAVGPGASG. The LRRNT domain occupies 40-68; that stretch reads VCPTACICATDIVSCTNKHLSKVPGNLFR. Residues 40–398 lie on the Extracellular side of the membrane; sequence VCPTACICAT…RSHAHEAFNT (359 aa). 2 disulfide bridges follow: C41/C47 and C45/C54. LRR repeat units follow at residues 69–90, 94–115, 118–139, 142–163, 166–187, and 193–214; these read LMKRLDLSYNRIGLLDSEWIPV, KLNTLILRHNNITSISTGSFST, NLKCLDLSSNKLKTVKNAVFQE, VLEVLLLYNNHISYLDPSAFGG, QLQKLYLSGNFLTQFPMDLYVG, and ELMFLDVSYNRIPSMPMHHINL. N104 is a glycosylation site (N-linked (GlcNAc...) asparagine). The LRRCT domain maps to 228-284; sequence NPFVCDCSLYSLLVFWYRRHFSSVMDFKNDYTCRLWSDSRHSRQVLLLQDSFMNCSD. 2 disulfide bridges follow: C232/C260 and C234/C282. N-linked (GlcNAc...) asparagine glycans are attached at residues N281, N288, N345, N373, N381, and N384. Residues 289–379 form the Ig-like C2-type domain; sequence GSFRALGFIH…RLLNETVDVT (91 aa). Cysteines 310 and 363 form a disulfide. The chain crosses the membrane as a helical span at residues 399-419; sequence AFTTLAACVASIVLVLLYLYL. The Cytoplasmic portion of the chain corresponds to 420 to 522; the sequence is TPCPCKCKTK…FSDTPFVAST (103 aa). A disordered region spans residues 501 to 522; the sequence is RGKSDSDSVNSVFSDTPFVAST.

This sequence belongs to the immunoglobulin superfamily. AMIGO family. Binds itself as well as AMIGO1 and AMIGO3.

It is found in the cell membrane. The protein localises to the nucleus. Functionally, required for depolarization-dependent survival of cultured cerebellar granule neurons. May mediate homophilic as well as heterophilic cell-cell interaction with AMIGO1 or AMIGO3. May contribute to signal transduction through its intracellular domain. The protein is Amphoterin-induced protein 2 of Pongo abelii (Sumatran orangutan).